A 349-amino-acid polypeptide reads, in one-letter code: uncharacterized protein (349 aa).

Residues 16 to 36 form a helical membrane-spanning segment; that stretch reads LVITIISTGLIFGMTLVLTGL. A disordered region spans residues 111-139; it reads FGAPEHGPGMPRVSEGRSPSKPDEVAASS. A compositionally biased stretch (basic and acidic residues) spans 124–134; that stretch reads SEGRSPSKPDE. 3 consecutive transmembrane segments (helical) span residues 231–251, 284–304, and 307–327; these read ISIV…SVVY, VIAL…APLF, and IVAV…VIGL.

It belongs to the ABC-4 integral membrane protein family. As to quaternary structure, the complex is composed of two ATP-binding proteins (MT0079), two transmembrane proteins (MT0078) and a solute-binding protein.

The protein localises to the cell membrane. Its function is as follows. Probably part of an ABC transporter complex. Probably responsible for the translocation of the substrate across the membrane. This is an uncharacterized protein from Mycobacterium tuberculosis (strain CDC 1551 / Oshkosh).